The sequence spans 440 residues: Probable aldose 1-epimerase ARB_05372 (440 aa).

A signal peptide spans 1-24 (MCGVLRQLMLLLLAFLSITPSCSA). 5 N-linked (GlcNAc...) asparagine glycosylation sites follow: asparagine 32, asparagine 38, asparagine 43, asparagine 68, and asparagine 112. 125–126 (NR) lines the substrate pocket. Residues asparagine 129, asparagine 147, asparagine 163, asparagine 171, and asparagine 199 are each glycosylated (N-linked (GlcNAc...) asparagine). Catalysis depends on histidine 233, which acts as the Proton donor. N-linked (GlcNAc...) asparagine glycosylation is found at asparagine 243, asparagine 275, asparagine 281, and asparagine 306. Aspartate 311 serves as a coordination point for substrate. 4 N-linked (GlcNAc...) asparagine glycosylation sites follow: asparagine 321, asparagine 337, asparagine 365, and asparagine 385. Glutamate 401 serves as the catalytic Proton acceptor.

This sequence belongs to the aldose epimerase family. In terms of assembly, monomer.

The protein resides in the secreted. It carries out the reaction alpha-D-glucose = beta-D-glucose. It functions in the pathway carbohydrate metabolism; hexose metabolism. Mutarotase converts alpha-aldose to the beta-anomer. It is active on D-glucose, L-arabinose, D-xylose, D-galactose, maltose and lactose. The sequence is that of Probable aldose 1-epimerase ARB_05372 from Arthroderma benhamiae (strain ATCC MYA-4681 / CBS 112371) (Trichophyton mentagrophytes).